The following is a 1046-amino-acid chain: MSTDKLLLPNGVKSDGVIRMTRADAAAAAASSSLGGGSQIFDELPKAAIVSVSRPDTTDFSPLLLSYTLELQYKQFKWTLQKKASQVLYLHFALKKRLIIEELHDKQEQVREWLHSLGIFDMQGSVVQDDEEPDDGALPLHYTEDSIKNRNVPSRAALPIIRPTIGRSETVVDRGRTAMQGYLSLFLGNLDIVNSKEVCKFLEVSRLSFAREYGSKMKEGYVTVKHLRDVPGSDGVRCCLPTHCLGFFGTSWTKVWAVLKPGFLALLEDPFSGKLLDIMVFDTLGLQGTKESSEQPRLAEQVKEHNPLRFGFKVTSGDRTVRLRTTSSRKVKEWVKAVDEAGCYSPHRFGSFAPPRGLTSDGSQAQWFVDGHTAFEAIAFAIQNATSEIFMTGWWLCPELYLKRPFEDHPSLRLDALLETKAKQGVKIYILLYKEVQIALKINSLYSKKRLQNIHKNVKVLRYPDHLSSGIYLWSHHEKIVIVDYQVCFIGGLDLCFGRYDTAEHKIGDCPPYIWPGKDYYNPRESEPNSWEETMKDELDRRKYPRMPWHDVHCALWGPPCRDVARHFVQRWNHSKRNKAPNEQTIPLLMPHHHMVLPHYLGTREIDIIAAAKPEEDPDKPVVLARHDSFSSASPPQEIPLLLPQETDADFAGRGDLKLDSGARQDPGETSEESDLDEAVNDWWWQIGKQSDCRCQIIRSVSQWSAGTSQPEDSIHRAYCSLIQNAEHFIYIENQFFISGLEKEDTILNRVLEALYRRILKAHEENKCFRVVIVIPLLPGFQGGIDDFGAATVRALMHWQYRTISREGTSILDNLNALLGPKTQDYISFYGLRSYGRLFEDGPIATSQIYVHSKLMIVDDRIAVIGSSNINDRSLLGSRDSEIGVVIEDKEFVESSMNGMKWMAGKFSYSLRCSLWSEHLGLHAGEIQKIEDPIKDATYKDLWMATAKKNTDIYNQVFSCIPNEHIRSRAALRHNMALCKDKLGHTTIDLGIAPERLESCGSDSWEILKETRGNLVCFPLQFMCDQEDLRPGFNESEFYTAPQVFH.

The 161-residue stretch at 45–205 folds into the PX domain; it reads PKAAIVSVSR…KEVCKFLEVS (161 aa). Residues 215 to 343 enclose the PH domain; the sequence is SKMKEGYVTV…WVKAVDEAGC (129 aa). Residues 472–499 form the PLD phosphodiesterase 1 domain; it reads YLWSHHEKIVIVDYQVCFIGGLDLCFGR. Active-site residues include His477, Lys479, and Asp484. Residues 653 to 667 are compositionally biased toward basic and acidic residues; it reads GRGDLKLDSGARQDP. The tract at residues 653–677 is disordered; the sequence is GRGDLKLDSGARQDPGETSEESDLD. The region spanning 847-874 is the PLD phosphodiesterase 2 domain; sequence SQIYVHSKLMIVDDRIAVIGSSNINDRS. Residues His852, Lys854, and Asp859 contribute to the active site.

It belongs to the phospholipase D family. PXPH-PLD subfamily. Does not require Ca(2+) or any other cation for activity. is required as a cofactor. As to expression, expressed in seedlings, roots, leaves, stems and flowers. Highest expression in roots. Detected only in the meristematic regions up to 4 days after germination and then at later stages in all tissues.

It catalyses the reaction a 1,2-diacyl-sn-glycero-3-phosphocholine + H2O = a 1,2-diacyl-sn-glycero-3-phosphate + choline + H(+). In terms of biological role, hydrolyzes glycerol-phospholipids at the terminal phosphodiesteric bond to generate phosphatidic acids (PA). Phosphatidylcholine-selective. Regulates vesicle trafficking and auxin responses. Required for the normal cycling of PIN-2 containing vesicles. Contributes to the supply of inorganic phosphorus for cell metabolism and diacylglycerol moieties for galactolipid synthesis in phosphorus-starved roots. Involved in root elongation during phosphate limitation. The chain is Phospholipase D zeta 2 from Arabidopsis thaliana (Mouse-ear cress).